We begin with the raw amino-acid sequence, 405 residues long: MLNLQPYENPQYFVYLIIALLPVIIGMFKGFRMHWYESIFSLVFLVLIFDADKWPQGKALLGYVVFNLLLVYAYFKYRTREGSKNSTAVFYLSVALGIAHVAVVKFTPLFQHHGSILGFLGISYLTFRVVGTIMEIRDGSIKDLNMWKFIQFLLFFPTISSGPIDRYRRFVKDYDRVPDPEHYAQLVTKAIHYLMLGFLYKFILGYIFGTLWLPSVEHMAMASRGGAFLGLSWPVVGVMYAYSGYLFFDFAGYSLFAVAISYLMGIETPMNFNKPWSHITSRLLNRWQLSLSFWFRDYIYMRFVFFMMKHKWIKSRVWTAFVGYLVLFLIMGIWHGETWYYIVYGLFHAMLINLTDAWLRFKKKHKDFFPHNRATHYPSPFSMTANAVCFSFLIFSGFLDKLWFH.

The Extracellular segment spans residues 1–9 (MLNLQPYEN). The helical transmembrane segment at 10-29 (PQYFVYLIIALLPVIIGMFK) threads the bilayer. Residues 30–33 (GFRM) are Cytoplasmic-facing. A helical transmembrane segment spans residues 34–49 (HWYESIFSLVFLVLIF). At 50-53 (DADK) the chain is on the extracellular side. The chain crosses the membrane as a helical span at residues 54-80 (WPQGKALLGYVVFNLLLVYAYFKYRTR). At 81-86 (EGSKNS) the chain is on the cytoplasmic side. A helical transmembrane segment spans residues 87–111 (TAVFYLSVALGIAHVAVVKFTPLFQ). The Extracellular segment spans residues 112–121 (HHGSILGFLG). Residues 122 to 138 (ISYLTFRVVGTIMEIRD) form a helical membrane-spanning segment. Over 139–145 (GSIKDLN) the chain is Cytoplasmic. The stretch at 146–175 (MWKFIQFLLFFPTISSGPIDRYRRFVKDYD) is an intramembrane region. Topologically, residues 176–179 (RVPD) are cytoplasmic. The chain crosses the membrane as a helical span at residues 180 to 223 (PEHYAQLVTKAIHYLMLGFLYKFILGYIFGTLWLPSVEHMAMAS). Residues 224–232 (RGGAFLGLS) lie on the Extracellular side of the membrane. A helical transmembrane segment spans residues 233-264 (WPVVGVMYAYSGYLFFDFAGYSLFAVAISYLM). The Cytoplasmic portion of the chain corresponds to 265-274 (GIETPMNFNK). Residues 275-310 (PWSHITSRLLNRWQLSLSFWFRDYIYMRFVFFMMKH) lie within the membrane without spanning it. Over 311–315 (KWIKS) the chain is Cytoplasmic. Residues 316–335 (RVWTAFVGYLVLFLIMGIWH) traverse the membrane as a helical segment. The active site involves His335. The Extracellular portion of the chain corresponds to 336-338 (GET). Residues 339 to 372 (WYYIVYGLFHAMLINLTDAWLRFKKKHKDFFPHN) traverse the membrane as a helical segment. At 373-378 (RATHYP) the chain is on the cytoplasmic side. Residues 379–399 (SPFSMTANAVCFSFLIFSGFL) traverse the membrane as a helical segment. The Extracellular portion of the chain corresponds to 400–405 (DKLWFH).

It belongs to the membrane-bound acyltransferase family.

It localises to the cell membrane. It participates in cell wall biogenesis; lipoteichoic acid biosynthesis. In terms of biological role, O-acyltransferase that catalyzes D-alanylation of both teichoic acid and lipoteichoic acid (LTA). D-alanylation of LTA plays an important role in modulating the properties of the cell wall in Gram-positive bacteria, influencing the net charge of the cell wall. Catalyzes D-alanylation from DltC carrier protein. The sequence is that of Teichoic acid D-alanyltransferase from Lacticaseibacillus rhamnosus (Lactobacillus rhamnosus).